A 148-amino-acid polypeptide reads, in one-letter code: Arginine repressor (148 aa).

Belongs to the ArgR family.

Its subcellular location is the cytoplasm. Its pathway is amino-acid biosynthesis; L-arginine biosynthesis [regulation]. Functionally, regulates arginine biosynthesis genes. The chain is Arginine repressor from Acidobacterium capsulatum (strain ATCC 51196 / DSM 11244 / BCRC 80197 / JCM 7670 / NBRC 15755 / NCIMB 13165 / 161).